A 177-amino-acid polypeptide reads, in one-letter code: MSQLTTVARPYAKAAFDFALEQGQLDKWQEMLQFSALVAENEDVQHFIHSSSAATQVADTFIAICGDQLDQYGQNFIRVMAENKRLSALPSVFASFNQIRAEYESVKDVFVTSATPLTKAQEDKIAKAMKQKLNSEVRITTSIDASLIAGVIIRYDDVVIDGSSRGQLNRLSQELCL.

Belongs to the ATPase delta chain family. In terms of assembly, F-type ATPases have 2 components, F(1) - the catalytic core - and F(0) - the membrane proton channel. F(1) has five subunits: alpha(3), beta(3), gamma(1), delta(1), epsilon(1). F(0) has three main subunits: a(1), b(2) and c(10-14). The alpha and beta chains form an alternating ring which encloses part of the gamma chain. F(1) is attached to F(0) by a central stalk formed by the gamma and epsilon chains, while a peripheral stalk is formed by the delta and b chains.

It localises to the cell inner membrane. In terms of biological role, f(1)F(0) ATP synthase produces ATP from ADP in the presence of a proton or sodium gradient. F-type ATPases consist of two structural domains, F(1) containing the extramembraneous catalytic core and F(0) containing the membrane proton channel, linked together by a central stalk and a peripheral stalk. During catalysis, ATP synthesis in the catalytic domain of F(1) is coupled via a rotary mechanism of the central stalk subunits to proton translocation. This protein is part of the stalk that links CF(0) to CF(1). It either transmits conformational changes from CF(0) to CF(1) or is implicated in proton conduction. The sequence is that of ATP synthase subunit delta from Glaesserella parasuis serovar 5 (strain SH0165) (Haemophilus parasuis).